A 102-amino-acid polypeptide reads, in one-letter code: Protein RnfH (102 aa).

It belongs to the UPF0125 (RnfH) family.

This chain is Protein RnfH, found in Haemophilus influenzae (strain PittEE).